Reading from the N-terminus, the 219-residue chain is 7-cyano-7-deazaguanine synthase (219 aa).

An ATP-binding site is contributed by 10-20; the sequence is FSGGQDSTTCL. 4 residues coordinate Zn(2+): cysteine 188, cysteine 197, cysteine 200, and cysteine 203.

This sequence belongs to the QueC family. Homodimer. The cofactor is Zn(2+).

The catalysed reaction is 7-carboxy-7-deazaguanine + NH4(+) + ATP = 7-cyano-7-deazaguanine + ADP + phosphate + H2O + H(+). It participates in purine metabolism; 7-cyano-7-deazaguanine biosynthesis. Catalyzes the ATP-dependent conversion of 7-carboxy-7-deazaguanine (CDG) to 7-cyano-7-deazaguanine (preQ(0)). The sequence is that of 7-cyano-7-deazaguanine synthase from Clostridium botulinum (strain Kyoto / Type A2).